The primary structure comprises 294 residues: 4-hydroxy-tetrahydrodipicolinate synthase (294 aa).

Threonine 44 is a binding site for pyruvate. Tyrosine 132 acts as the Proton donor/acceptor in catalysis. Catalysis depends on lysine 160, which acts as the Schiff-base intermediate with substrate. Residue valine 202 coordinates pyruvate.

It belongs to the DapA family. Homotetramer; dimer of dimers.

Its subcellular location is the cytoplasm. It catalyses the reaction L-aspartate 4-semialdehyde + pyruvate = (2S,4S)-4-hydroxy-2,3,4,5-tetrahydrodipicolinate + H2O + H(+). Its pathway is amino-acid biosynthesis; L-lysine biosynthesis via DAP pathway; (S)-tetrahydrodipicolinate from L-aspartate: step 3/4. Its function is as follows. Catalyzes the condensation of (S)-aspartate-beta-semialdehyde [(S)-ASA] and pyruvate to 4-hydroxy-tetrahydrodipicolinate (HTPA). This Leptospira borgpetersenii serovar Hardjo-bovis (strain JB197) protein is 4-hydroxy-tetrahydrodipicolinate synthase.